Reading from the N-terminus, the 1479-residue chain is Putative receptor-type tyrosine-protein phosphatase mosPTP-1 (1479 aa).

Residues 1–28 form the signal peptide; that stretch reads MKPRLLTTVTTWLALVLPVVYLSRPCQA. Residues 29 to 365 are Extracellular-facing; the sequence is LPTVNFTANY…RQSYNDYNLA (337 aa). 7 N-linked (GlcNAc...) asparagine glycosylation sites follow: Asn33, Asn40, Asn146, Asn182, Asn248, Asn294, and Asn306. 2 Fibronectin type-III domains span residues 143 to 242 and 243 to 346; these read KPLN…AGPS and APKV…VQLN. Residues 366–386 traverse the membrane as a helical segment; sequence VMIGILICCFGLLFIVLTILL. Residues 387–1479 are Cytoplasmic-facing; that stretch reads WKKCFHAAYY…AKLRAVVRVE (1093 aa). Tyrosine-protein phosphatase domains are found at residues 452 to 717 and 740 to 992; these read FSKE…LVEA and IDSQ…LSYM. Cys658 (phosphocysteine intermediate) is an active-site residue.

It belongs to the protein-tyrosine phosphatase family. Receptor class subfamily. In terms of assembly, interacts with C-type lectin mosGCTL-1. Interacts with C-type lectin mosGCTL-7.

The protein localises to the cell membrane. The enzyme catalyses O-phospho-L-tyrosyl-[protein] + H2O = L-tyrosyl-[protein] + phosphate. Its function is as follows. Putative protein tyrosine-protein phosphatase. In terms of biological role, (Microbial infection) Facilitates West Nile virus infection in mosquitoes. The protein is Putative receptor-type tyrosine-protein phosphatase mosPTP-1 of Culex quinquefasciatus (Southern house mosquito).